The primary structure comprises 856 residues: Wall-associated receptor kinase 17 (856 aa).

The first 42 residues, 1-42, serve as a signal peptide directing secretion; that stretch reads MPSRSPACRPRGRNRRSAADAVARPLALALILVSTLPRAAHS. N171 and N234 each carry an N-linked (GlcNAc...) asparagine glycan. The region spanning 297-334 is the EGF-like 1 domain; sequence FEKLCKYGTCVDAPTGAGYLCKCPSGYDGNPYVSDGCQ. Cystine bridges form between C301-C306, C319-C333, C339-C353, C347-C362, and C364-C379. In terms of domain architecture, EGF-like 2; calcium-binding spans 335-380; that stretch reads DINECRNYNSNNCTYQNLCNNTLGGYTCSCPENNIGDGYRTGTGCN. N-linked (GlcNAc...) asparagine glycosylation is found at N346 and N354. N-linked (GlcNAc...) asparagine glycosylation occurs at N380. The helical transmembrane segment at 452–470 threads the bilayer; it reads VLGVSLVLMVTTTTAASCY. The 279-residue stretch at 527–805 folds into the Protein kinase domain; sequence YSESRILGRG…VLQELRRSFT (279 aa). Residues 533 to 541 and K555 contribute to the ATP site; that span reads LGRGGQGTV. D652 functions as the Proton acceptor in the catalytic mechanism. Residues 816–844 form a disordered region; the sequence is SIQENSEQEEKHLHESRSIPSLQSSEVST. The span at 823–832 shows a compositional bias: basic and acidic residues; the sequence is QEEKHLHESR. Over residues 833–844 the composition is skewed to polar residues; sequence SIPSLQSSEVST.

This sequence belongs to the protein kinase superfamily. Ser/Thr protein kinase family. As to quaternary structure, interacts with WAK17 isoform 2; the interaction is direct. Interacts with LRR5; the interaction is direct. Interacts with WAK17 isoform 1; the interaction is direct. In terms of assembly, (Microbial infection) Interacts with G.zeae CFEM1 (via CFEM domain); the interaction is direct. Interacts with G.zeae CFEMN1; the interaction is direct. Interacts with G.zeae CFEM5; the interaction is direct. Requires Mn(2+) as cofactor. Mg(2+) serves as cofactor.

It is found in the cell membrane. The enzyme catalyses L-seryl-[protein] + ATP = O-phospho-L-seryl-[protein] + ADP + H(+). It carries out the reaction L-threonyl-[protein] + ATP = O-phospho-L-threonyl-[protein] + ADP + H(+). Its function is as follows. Kinase that contributes to activation of the hypersensitive response, a form of programmed cell death, upon fungal infection. In terms of biological role, secreted protein that contributes to activation of the hypersensitive response, a form of programmed cell death, upon fungal infection. May sense the presence of fungal material and relay the signal to WAK17 isoform 1. In Zea mays (Maize), this protein is Wall-associated receptor kinase 17.